A 315-amino-acid polypeptide reads, in one-letter code: Bifunctional protein FolD (315 aa).

Residues 166–168, Ser-193, and Ile-234 contribute to the NADP(+) site; that span reads GRS.

It belongs to the tetrahydrofolate dehydrogenase/cyclohydrolase family. As to quaternary structure, homodimer.

The enzyme catalyses (6R)-5,10-methylene-5,6,7,8-tetrahydrofolate + NADP(+) = (6R)-5,10-methenyltetrahydrofolate + NADPH. The catalysed reaction is (6R)-5,10-methenyltetrahydrofolate + H2O = (6R)-10-formyltetrahydrofolate + H(+). It functions in the pathway one-carbon metabolism; tetrahydrofolate interconversion. Catalyzes the oxidation of 5,10-methylenetetrahydrofolate to 5,10-methenyltetrahydrofolate and then the hydrolysis of 5,10-methenyltetrahydrofolate to 10-formyltetrahydrofolate. The chain is Bifunctional protein FolD from Treponema pallidum (strain Nichols).